The chain runs to 168 residues: Disulfide bond formation protein B 1 (168 aa).

At 1–14 (MNELTSRLNRERRF) the chain is on the cytoplasmic side. A helical transmembrane segment spans residues 15–31 (LVLLGVICLALIGGALY). Topologically, residues 32 to 49 (MQVVLGEAPCPLCILQRY) are periplasmic. Cys41 and Cys44 are joined by a disulfide. The helical transmembrane segment at 50 to 65 (ALLFIAIFAFIAAAMP) threads the bilayer. The Cytoplasmic segment spans residues 66–72 (GRKSLTF). The chain crosses the membrane as a helical span at residues 73–89 (FEVLVVLSAIGGIVAAG). At 90-144 (NHVYILANPMVSCGIDTLQPIVDDLPLAKLWPLAFQVDGFCSTPYPPILGLSLAQ) the chain is on the periplasmic side. Cysteines 102 and 130 form a disulfide. A helical transmembrane segment spans residues 145–163 (WALVAFVLTTVLVPLGIYR). The Cytoplasmic segment spans residues 164–168 (NRRRG).

The protein belongs to the DsbB family.

It is found in the cell inner membrane. Functionally, required for disulfide bond formation in some periplasmic proteins. Acts by oxidizing the DsbA protein. The polypeptide is Disulfide bond formation protein B 1 (Pseudomonas entomophila (strain L48)).